The following is a 329-amino-acid chain: Thioredoxin-like fold domain-containing protein MRL7L homolog, chloroplastic (329 aa).

The N-terminal 46 residues, 1-46 (MALQSCCSSSASVPATCSALCLAEATRAASLFVRPRAAARRLVLAR), are a transit peptide targeting the chloroplast. The segment at 58–91 (AVQLVLGGRARDDGSESESSDDEDDDEPMQMTDE) is disordered. A compositionally biased stretch (acidic residues) spans 72 to 85 (SESESSDDEDDDEP).

Its subcellular location is the plastid. It is found in the chloroplast stroma. Its function is as follows. Plays an essential role in early steps of chloroplast development. Involved in the regulation of plastid gene expression. Required for the proper function of the plastid transcriptional machinery and protein accumulation in thylakoid membranes. May function as molecular chaperone to ensure proper organization of the nucleoids in chloroplasts. In Oryza sativa subsp. japonica (Rice), this protein is Thioredoxin-like fold domain-containing protein MRL7L homolog, chloroplastic.